The chain runs to 236 residues: MKFTFVTLFENLVKPYFNDSILARAVENNKIDVNFINPRDHTTQKHFKVDEYMIGGGAGLLMMPQPLNDTLKKIKENDPDVHIVFLTPAAKKFNQKDAKRLAGKKHICFVCGRYEGIDERIVELWADEVFCVGDFILTGGELGALCLADAIARNIEGVLGNSQSLAIESFEDGLLEAPSFTKPDVFDGNFVVSEFLKGNHAKIRLLKNKMAHCKTRFFRPDLYQKLKPQIKEKHEK.

S-adenosyl-L-methionine contacts are provided by residues Gly-112 and 132–137 (VGDFIL).

Belongs to the RNA methyltransferase TrmD family. In terms of assembly, homodimer.

The protein localises to the cytoplasm. The enzyme catalyses guanosine(37) in tRNA + S-adenosyl-L-methionine = N(1)-methylguanosine(37) in tRNA + S-adenosyl-L-homocysteine + H(+). In terms of biological role, specifically methylates guanosine-37 in various tRNAs. The chain is tRNA (guanine-N(1)-)-methyltransferase from Campylobacter curvus (strain 525.92).